The sequence spans 107 residues: Integration host factor subunit alpha (107 aa).

This sequence belongs to the bacterial histone-like protein family. Heterodimer of an alpha and a beta chain.

In terms of biological role, this protein is one of the two subunits of integration host factor, a specific DNA-binding protein that functions in genetic recombination as well as in transcriptional and translational control. The protein is Integration host factor subunit alpha of Brucella anthropi (strain ATCC 49188 / DSM 6882 / CCUG 24695 / JCM 21032 / LMG 3331 / NBRC 15819 / NCTC 12168 / Alc 37) (Ochrobactrum anthropi).